The following is a 288-amino-acid chain: T-cell-interacting, activating receptor on myeloid cells protein 1 (288 aa).

An N-terminal signal peptide occupies residues 1-16; sequence MISRLLSLLCLRLCVG. Residues 17–258 are Extracellular-facing; it reads QTDIPENGSP…EGYTVDNLIR (242 aa). Ig-like C2-type domains are found at residues 27–113 and 124–217; these read PKPS…HPSN and PQPS…LEIS. Disulfide bonds link Cys49/Cys97 and Cys146/Cys196. Residues Asn74 and Asn185 are each glycosylated (N-linked (GlcNAc...) asparagine). A helical transmembrane segment spans residues 259–279; sequence VGVAAAILLIVGGFLVEAWHS. The Cytoplasmic portion of the chain corresponds to 280–288; sequence ERLSPNKPW.

Interacts with Fc receptor gamma chain FCER1G. Post-translationally, N-glycosylated. In terms of tissue distribution, expressed in lung, uterus, lymph nodes, spleen, thymus and bone marrow. Expressed in bone marrow CD11b(+)Gr-1(+) granulocyte precursors and mature neutrophils.

It is found in the cell membrane. Functionally, may act as receptor. Negatively regulates TCR-mediated CD4(+) T cell proliferation and activation, possibly by binding an unknown ligand on the T cell surface. Enhances Toll-like receptor-mediated production of pro-inflammatory cytokines by macrophages and neutrophils. In Mus musculus (Mouse), this protein is T-cell-interacting, activating receptor on myeloid cells protein 1 (Tarm1).